The sequence spans 1146 residues: Probable transport protein MmpL12 (1146 aa).

A run of 11 helical transmembrane segments spans residues 25-45 (LIVI…LPTL), 206-226 (VSVL…LVPL), 254-274 (AIVF…VFLI), 298-318 (IGKV…AMVF), 330-350 (AIAV…PAIL), 382-402 (TIHL…TLLI), 826-846 (FIVI…LRAL), 850-870 (IYLI…GTLV), 883-903 (LPGL…MLLI), 928-948 (VITS…GASI), and 949-969 (NTMA…TFLV).

Belongs to the resistance-nodulation-cell division (RND) (TC 2.A.6) family. MmpL subfamily.

It is found in the cell membrane. This chain is Probable transport protein MmpL12 (mmpL12), found in Mycobacterium tuberculosis (strain CDC 1551 / Oshkosh).